The sequence spans 400 residues: Outer membrane protein alpha (400 aa).

The first 20 residues, 1-20, serve as a signal peptide directing secretion; it reads MKRVLLTVAMLSVFFSAMFA. The SLH domain occupies 21–81; that stretch reads FFPDVPKDHW…DFIEQKMLAG (61 aa). A coiled-coil region spans residues 85 to 379; the sequence is DLAQVVGNLS…ESVKAYNRNL (295 aa). 3 repeat units span residues 208–232, 251–275, and 326–350. The segment at 208-350 is 3 X 25 AA approximate repeat; that stretch reads VNLHEKDIIN…SSLEEDLNMK (143 aa). The chain crosses the membrane as a helical span at residues 380–400; sequence SILTGAFFGILGLILIAISGK.

Homotetramer.

It is found in the cell outer membrane. In terms of biological role, links the outer membrane to the inner membrane. Long fibrous protein that could serve to separate the two membranes. The chain is Outer membrane protein alpha (omp-alpha) from Thermotoga maritima (strain ATCC 43589 / DSM 3109 / JCM 10099 / NBRC 100826 / MSB8).